A 549-amino-acid chain; its full sequence is Speedy protein E3 (549 aa).

A compositionally biased stretch (low complexity) spans Met1–Gln15. 5 disordered regions span residues Met1–Glu74, Lys126–Pro145, Ser188–Pro218, Ser261–Pro291, and Ser334–Pro364. 5 stretches are compositionally biased toward acidic residues: residues Asp58–Glu74, Asp131–Pro145, Asp204–Pro218, Asp277–Pro291, and Asp350–Pro364.

Belongs to the Speedy/Ringo family. As to expression, predominantly expressed in testis and spleen.

The protein is Speedy protein E3 of Homo sapiens (Human).